Here is a 489-residue protein sequence, read N- to C-terminus: Aspartate/glutamate permease AcaP (489 aa).

12 helical membrane passes run 6-26 (IRWF…GNVV), 36-56 (VVTS…LIVG), 91-111 (VVHI…FGWV), 122-142 (MSMT…LWLS), 152-172 (IGGL…VMAI), 195-215 (IPKF…AVGG), 238-258 (FLLA…MGMI), 290-310 (LMIV…AFSI), 342-362 (GYTL…LGIG), 373-393 (NLNS…FIML), 413-433 (AMIA…LGMV), and 449-469 (LASN…LPFI).

The protein belongs to the amino acid-polyamine-organocation (APC) superfamily. Glutamate:GABA antiporter (GGA) (TC 2.A.3.7) family.

Its subcellular location is the cell membrane. Involved in aspartate and glutamate uptake. Plays no significant role in the excretion of accumulated glutamate. The protein is Aspartate/glutamate permease AcaP of Lactococcus lactis subsp. cremoris (strain MG1363).